Reading from the N-terminus, the 128-residue chain is Crossover junction endodeoxyribonuclease Hjc (128 aa).

A Mg(2+)-binding site is contributed by Glu-10. Residue Ser-30 is part of the active site. Residues Asp-34 and Glu-47 each coordinate Mg(2+).

It belongs to the Holliday junction resolvase Hjc family. In terms of assembly, homodimer. The cofactor is Mg(2+).

The enzyme catalyses Endonucleolytic cleavage at a junction such as a reciprocal single-stranded crossover between two homologous DNA duplexes (Holliday junction).. Functionally, a structure-specific endonuclease that resolves Holliday junction (HJ) intermediates during genetic recombination. Cleaves 4-way DNA junctions introducing paired nicks in opposing strands, leaving a 5'-terminal phosphate and a 3'-terminal hydroxyl group that are subsequently ligated to produce recombinant products. The protein is Crossover junction endodeoxyribonuclease Hjc of Thermococcus kodakarensis (strain ATCC BAA-918 / JCM 12380 / KOD1) (Pyrococcus kodakaraensis (strain KOD1)).